A 182-amino-acid chain; its full sequence is Heat shock protein beta-2 (182 aa).

The sHSP domain occupies 55–163 (RAGEGGRAGA…DTEVNEVYIS (109 aa)).

The protein belongs to the small heat shock protein (HSP20) family. In terms of assembly, interacts with DMPK; may enhance its kinase activity.

The protein resides in the cytoplasm. It is found in the nucleus. May regulate the kinase DMPK. In Rattus norvegicus (Rat), this protein is Heat shock protein beta-2 (Hspb2).